The chain runs to 170 residues: MGNEASYPLEMCSHFDADEIKRLGKRFKKLDLDNSGSLSVEEFMSLPELQQNPLVQRVIDIFDTDGNGEVDFKEFIEGVSQFSVKGDKEQKLRFAFRIYDMDKDGYISNGELFQVLKMMVGNNLKDTQLQQIVDKTIINADKDGDGRISFEEFCAVVGGLDIHKKMVVDV.

Gly2 carries the N-myristoyl glycine lipid modification. EF-hand domains lie at 18 to 46 (DEIK…FMSL), 50 to 85 (QQNP…FSVK), 87 to 122 (DKEQ…MVGN), and 128 to 163 (QLQQ…LDIH). Ca(2+) contacts are provided by Asp31, Asp33, Ser35, Ser37, Glu42, Asp63, Asp65, Asn67, Glu69, Glu74, Asp100, Asp102, Asp104, Tyr106, and Glu111. Tyr106 bears the Phosphotyrosine mark. Residues 131–136 (QIVDKT) form a calcineurin A binding region. Ca(2+) is bound by residues Asp141, Asp143, Asp145, Arg147, and Glu152.

Belongs to the calcineurin regulatory subunit family. As to quaternary structure, forms a complex composed of a calmodulin-dependent catalytic subunit (also known as calcineurin A) and a regulatory Ca(2+)-binding subunit (also known as calcineurin B). There are three catalytic subunits, each encoded by a separate gene (PPP3CA, PPP3CB, and PPP3CC) and two regulatory subunits which are also encoded by separate genes (PPP3R1 and PPP3R2). The interaction between the 2 subunits is Ca(2+)-independent. Interacts with catalytic subunit PPP3CA/calcineurin A. Interacts with catalytic subunit PPP3CB/calcineurin A. Interacts with CIB1 (via C-terminal region); the interaction increases upon cardiomyocyte hypertrophy. Interacts with RCAN1. Interacts with SPATA33 (via PQIIIT motif).

It is found in the cytoplasm. Its subcellular location is the cytosol. The protein localises to the cell membrane. The protein resides in the sarcolemma. Its function is as follows. Regulatory subunit of calcineurin, a calcium-dependent, calmodulin stimulated protein phosphatase. Confers calcium sensitivity. This chain is Calcineurin subunit B type 1 (PPP3R1), found in Bos taurus (Bovine).